The chain runs to 62 residues: Potassium channel toxin alpha-KTx Tx773 (62 aa).

The N-terminal stretch at 1–18 (MQKLFIVLLLFCILRLDA) is a signal peptide. Intrachain disulfides connect Cys28–Cys46, Cys33–Cys59, and Cys37–Cys61.

The protein belongs to the short scorpion toxin superfamily. Potassium channel inhibitor family. Alpha-KTx 23 subfamily. In terms of tissue distribution, expressed by the venom gland.

It localises to the secreted. In terms of biological role, may block potassium channels. This chain is Potassium channel toxin alpha-KTx Tx773, found in Buthus israelis (Israeli scorpion).